A 232-amino-acid chain; its full sequence is Small ribosomal subunit protein uS3 (232 aa).

Residues Val39–Arg107 form the KH type-2 domain.

It belongs to the universal ribosomal protein uS3 family. As to quaternary structure, part of the 30S ribosomal subunit. Forms a tight complex with proteins S10 and S14.

In terms of biological role, binds the lower part of the 30S subunit head. Binds mRNA in the 70S ribosome, positioning it for translation. This Erwinia tasmaniensis (strain DSM 17950 / CFBP 7177 / CIP 109463 / NCPPB 4357 / Et1/99) protein is Small ribosomal subunit protein uS3.